A 314-amino-acid polypeptide reads, in one-letter code: Ribonuclease Z (314 aa).

Residues histidine 62, histidine 64, aspartate 66, histidine 67, histidine 144, aspartate 215, and histidine 273 each contribute to the Zn(2+) site. The Proton acceptor role is filled by aspartate 66.

Belongs to the RNase Z family. In terms of assembly, homodimer. Zn(2+) is required as a cofactor.

The catalysed reaction is Endonucleolytic cleavage of RNA, removing extra 3' nucleotides from tRNA precursor, generating 3' termini of tRNAs. A 3'-hydroxy group is left at the tRNA terminus and a 5'-phosphoryl group is left at the trailer molecule.. Its function is as follows. Zinc phosphodiesterase, which displays some tRNA 3'-processing endonuclease activity. Probably involved in tRNA maturation, by removing a 3'-trailer from precursor tRNA. This Prochlorococcus marinus (strain NATL2A) protein is Ribonuclease Z.